Consider the following 394-residue polypeptide: Phosphorylated adapter RNA export protein (394 aa).

Composition is skewed to acidic residues over residues 1-18 (MAQEAGDMDDGQVSDSDS) and 65-77 (SSEESFSDSDDDS). The tract at residues 1-109 (MAQEAGDMDD…DQSSQKPPIA (109 aa)) is disordered. Position 2 is an N-acetylalanine (A2). Positions 2-329 (AQEAGDMDDG…KAARKRRIQV (328 aa)) are necessary for interaction with CBP80. Residues S14, S16, S65, S66, S69, and S73 each carry the phosphoserine modification. Positions 81 to 84 (KRKR) match the Nuclear localization signal motif. The short motif at 130 to 139 (VATELGILGM) is the Nuclear export signal element. The segment covering 178–193 (YMHGGKKTGPKEEENG) has biased composition (basic and acidic residues). Residues 178 to 208 (YMHGGKKTGPKEEENGQGHPKRKRPVKDRVG) are disordered. The Nuclear localization signal motif lies at 198-201 (KRKR). S226 is modified (phosphoserine). Residues 228–328 (ERVADEISFR…KKAARKRRIQ (101 aa)) are sufficient for poly U RNA-binding. The interval 279-287 (GSRRRTPGG) is necessary for poly U RNA-binding and snRNA export. At T296 the chain carries Phosphothreonine. Residues S356 and S368 each carry the phosphoserine modification. The disordered stretch occupies residues 365 to 394 (LDESQEGHGETKLDAEEAIEVDHSHDLDMF). A compositionally biased stretch (basic and acidic residues) spans 369–394 (QEGHGETKLDAEEAIEVDHSHDLDMF).

The protein belongs to the PHAX family. Found in a U snRNA export complex with PHAX/RNUXA, NCBP1/CBP80, NCBP2/CBP20, RAN, XPO1 and m7G-capped RNA. Part of a precomplex with PHAX/RNUXA, NCBP1/CBP80, NCBP2/CBP20 and m7G-capped RNA. Interacts with NCBP1/CBP80. Found in a complex with snoRNA, Interacts with NCBP2/CBP20. Interacts with DDX39A; this interaction stimulates PHAX RNA binding activity. Post-translationally, phosphorylated in the nucleus. Dephosphorylated in the cytoplasm.

The protein resides in the nucleus. It is found in the nucleoplasm. The protein localises to the cajal body. Its subcellular location is the cytoplasm. In terms of biological role, a phosphoprotein adapter involved in the XPO1-mediated U snRNA export from the nucleus. Bridge components required for U snRNA export, the cap binding complex (CBC)-bound snRNA on the one hand and the GTPase Ran in its active GTP-bound form together with the export receptor XPO1 on the other. Its phosphorylation in the nucleus is required for U snRNA export complex assembly and export, while its dephosphorylation in the cytoplasm causes export complex disassembly. It is recycled back to the nucleus via the importin alpha/beta heterodimeric import receptor. The directionality of nuclear export is thought to be conferred by an asymmetric distribution of the GTP- and GDP-bound forms of Ran between the cytoplasm and nucleus. Its compartmentalized phosphorylation cycle may also contribute to the directionality of export. Binds strongly to m7G-capped U1 and U5 small nuclear RNAs (snRNAs) in a sequence-unspecific manner and phosphorylation-independent manner. Also plays a role in the biogenesis of U3 small nucleolar RNA (snoRNA). Involved in the U3 snoRNA transport from nucleoplasm to Cajal bodies. Binds strongly to m7G-capped U3, U8 and U13 precursor snoRNAs and weakly to trimethylated (TMG)-capped U3, U8 and U13 snoRNAs. Also binds to telomerase RNA. The polypeptide is Phosphorylated adapter RNA export protein (PHAX) (Bos taurus (Bovine)).